The following is a 126-amino-acid chain: Large ribosomal subunit protein bL12 (126 aa).

Residues 36–55 (APAPAAAPAAGGDQGGAEAA) show a composition bias toward low complexity. The interval 36–57 (APAPAAAPAAGGDQGGAEAAEQ) is disordered.

The protein belongs to the bacterial ribosomal protein bL12 family. As to quaternary structure, homodimer. Part of the ribosomal stalk of the 50S ribosomal subunit. Forms a multimeric L10(L12)X complex, where L10 forms an elongated spine to which 2 to 4 L12 dimers bind in a sequential fashion. Binds GTP-bound translation factors.

Functionally, forms part of the ribosomal stalk which helps the ribosome interact with GTP-bound translation factors. Is thus essential for accurate translation. The chain is Large ribosomal subunit protein bL12 from Natranaerobius thermophilus (strain ATCC BAA-1301 / DSM 18059 / JW/NM-WN-LF).